A 93-amino-acid chain; its full sequence is Large ribosomal subunit protein uL23 (93 aa).

It belongs to the universal ribosomal protein uL23 family. In terms of assembly, part of the 50S ribosomal subunit. Contacts protein L29, and trigger factor when it is bound to the ribosome.

Functionally, one of the early assembly proteins it binds 23S rRNA. One of the proteins that surrounds the polypeptide exit tunnel on the outside of the ribosome. Forms the main docking site for trigger factor binding to the ribosome. The protein is Large ribosomal subunit protein uL23 of Campylobacter jejuni subsp. doylei (strain ATCC BAA-1458 / RM4099 / 269.97).